The sequence spans 36 residues: Turgencin-A (36 aa).

3 cysteine pairs are disulfide-bonded: cysteine 8–cysteine 33, cysteine 12–cysteine 29, and cysteine 17–cysteine 26. Methionine 10 carries the post-translational modification Methionine sulfoxide. Valine amide is present on valine 36.

The protein localises to the secreted. Has antimicrobial activity against Gram-positive bacteria (C.glutamicum ATCC 13032 (MIC=0.4 uM), B.subtilis ATCC 23857 (MIC=0.4 uM) and S.aureus ATCC 9144 (MIC=6.3 uM)) and Gram-negative bacteria (E.coli ATCC 25922 (MIC=0.8 uM) and P.aeruginosa ATCC 27853 (MIC=1.6 uM)). The protein is Turgencin-A of Synoicum turgens (Colonial ascidian).